The chain runs to 77 residues: Conotoxin VnMEKL-0111 (77 aa).

The signal sequence occupies residues 1–19 (MEKLTILLLVAAVLMSTQA). A propeptide spanning residues 20–46 (LIQHDGEKSQKAKMKFLTARTLSAKTR) is cleaved from the precursor. Disulfide bonds link Cys-50-Cys-66, Cys-57-Cys-71, and Cys-65-Cys-75.

This sequence belongs to the conotoxin O2 superfamily. In terms of tissue distribution, expressed by the venom duct.

It is found in the secreted. The polypeptide is Conotoxin VnMEKL-0111 (Conus ventricosus (Mediterranean cone)).